The sequence spans 100 residues: Large ribosomal subunit protein bL27 (100 aa).

Residues 1-13 constitute a propeptide that is removed on maturation; the sequence is MNKLYWLTDLQLF. Residues 17–39 are disordered; the sequence is KGVGSSKNGRDSNPKYLGAKLGD.

This sequence belongs to the bacterial ribosomal protein bL27 family. The N-terminus is cleaved by ribosomal processing cysteine protease Prp.

This Ureaplasma parvum serovar 3 (strain ATCC 700970) protein is Large ribosomal subunit protein bL27.